The primary structure comprises 185 residues: Prenylated Rab acceptor protein 1 (185 aa).

The Cytoplasmic segment spans residues 1–78; it reads MAVEKDQQKD…RNVEYYQSNY (78 aa). The segment at 30–54 is required for interaction with prenylated RAB3A and VAMP2; sequence AGREWLERRRATIRSWGSFVDQRRF. The next 2 membrane-spanning stretches (helical) occupy residues 79-94 and 95-112; these read VFVF…ATSP and MLLV…ILYL. Over 113–131 the chain is Cytoplasmic; the sequence is RTLQSKFVLFGREVSPAHQ. The next 2 membrane-spanning stretches (helical) occupy residues 132–148 and 149–165; these read YALA…LAGA and GSAV…VIGS. Residues 165 to 185 form a required for interaction with GDI1 region; that stretch reads SHAAFHQIEAVDGEELQMEPV. The Cytoplasmic segment spans residues 166–185; sequence HAAFHQIEAVDGEELQMEPV. The interval 175-185 is required for interaction with prenylated RAB3A and VAMP2; the sequence is VDGEELQMEPV. Positions 175–185 are homodimerization; it reads VDGEELQMEPV.

The protein belongs to the PRA1 family. In terms of assembly, homodimer. Interacts with VAMP2 (synaptobrevin-2), prenylated Rab proteins, GDI1, NDRG1 and PCLO.

It is found in the cell membrane. It localises to the cytoplasm. The protein resides in the golgi apparatus. The protein localises to the cytoplasmic vesicle. Its subcellular location is the secretory vesicle. It is found in the synaptic vesicle. Its function is as follows. General Rab protein regulator required for vesicle formation from the Golgi complex. May control vesicle docking and fusion by mediating the action of Rab GTPases to the SNARE complexes. In addition it inhibits the removal of Rab GTPases from the membrane by GDI1. The chain is Prenylated Rab acceptor protein 1 (RABAC1) from Bos taurus (Bovine).